The sequence spans 559 residues: Oxygen-dependent choline dehydrogenase (559 aa).

4-33 contributes to the FAD binding site; sequence DYIIIGAGSAGNVLATRLTEESDVSVLLLE. The interval 182 to 201 is disordered; it reads EGFGPMDRTVTPKGRRASTA. Residue His-471 is the Proton acceptor of the active site.

This sequence belongs to the GMC oxidoreductase family. FAD serves as cofactor.

It carries out the reaction choline + A = betaine aldehyde + AH2. The enzyme catalyses betaine aldehyde + NAD(+) + H2O = glycine betaine + NADH + 2 H(+). It participates in amine and polyamine biosynthesis; betaine biosynthesis via choline pathway; betaine aldehyde from choline (cytochrome c reductase route): step 1/1. Involved in the biosynthesis of the osmoprotectant glycine betaine. Catalyzes the oxidation of choline to betaine aldehyde and betaine aldehyde to glycine betaine at the same rate. The sequence is that of Oxygen-dependent choline dehydrogenase from Pectobacterium carotovorum subsp. carotovorum (strain PC1).